Reading from the N-terminus, the 190-residue chain is Hypoxanthine/guanine phosphoribosyltransferase (190 aa).

The protein belongs to the purine/pyrimidine phosphoribosyltransferase family. Archaeal HPRT subfamily. As to quaternary structure, homodimer.

Its subcellular location is the cytoplasm. The catalysed reaction is IMP + diphosphate = hypoxanthine + 5-phospho-alpha-D-ribose 1-diphosphate. It carries out the reaction GMP + diphosphate = guanine + 5-phospho-alpha-D-ribose 1-diphosphate. The protein operates within purine metabolism; IMP biosynthesis via salvage pathway; IMP from hypoxanthine: step 1/1. Functionally, catalyzes a salvage reaction resulting in the formation of IMP that is energically less costly than de novo synthesis. This is Hypoxanthine/guanine phosphoribosyltransferase from Methanosalsum zhilinae (strain DSM 4017 / NBRC 107636 / OCM 62 / WeN5) (Methanohalophilus zhilinae).